The sequence spans 169 residues: Lipoprotein signal peptidase (169 aa).

Transmembrane regions (helical) follow at residues 10-30, 41-61, 68-88, and 94-114; these read LPWL…KAFF, VVIP…AFSF, WQRW…VVWL, and GETW…GNLY. Residues D124 and D143 contribute to the active site. The helical transmembrane segment at 135 to 155 threads the bilayer; sequence YFPAFNLADSAITVGAVMLAL.

The protein belongs to the peptidase A8 family.

The protein localises to the cell inner membrane. The catalysed reaction is Release of signal peptides from bacterial membrane prolipoproteins. Hydrolyzes -Xaa-Yaa-Zaa-|-(S,diacylglyceryl)Cys-, in which Xaa is hydrophobic (preferably Leu), and Yaa (Ala or Ser) and Zaa (Gly or Ala) have small, neutral side chains.. Its pathway is protein modification; lipoprotein biosynthesis (signal peptide cleavage). Its function is as follows. This protein specifically catalyzes the removal of signal peptides from prolipoproteins. The sequence is that of Lipoprotein signal peptidase from Pseudomonas paraeruginosa (strain DSM 24068 / PA7) (Pseudomonas aeruginosa (strain PA7)).